Consider the following 39-residue polypeptide: Natriuretic peptide NsNP-b (39 aa).

The propeptide occupies 1–8 (SGSKTAKI). C12 and C28 form a disulfide bridge. The tract at residues 19 to 39 (RIGSTSGMGCGSVPKPTPGGS) is disordered.

This sequence belongs to the natriuretic peptide family. As to expression, expressed by the venom gland.

It is found in the secreted. Snake venom natriuretic peptide that targets both NPR1 and NPR2. Exhibits hypotensive and vasodepressor activities. The protein is Natriuretic peptide NsNP-b of Notechis scutatus scutatus (Mainland tiger snake).